Here is a 122-residue protein sequence, read N- to C-terminus: MIHPETNLEVADNSGARRVQCIKVLGGSKRKTASVGDVIVVSVKEAIPRGKVKKGDVHQAVIVRTSFPVRRADGSAIRFDRNAAVLINKQQEPIGTRIFGPVVRELRGRKFMKIISLAPEVL.

It belongs to the universal ribosomal protein uL14 family. Part of the 50S ribosomal subunit. Forms a cluster with proteins L3 and L19. In the 70S ribosome, L14 and L19 interact and together make contacts with the 16S rRNA in bridges B5 and B8.

In terms of biological role, binds to 23S rRNA. Forms part of two intersubunit bridges in the 70S ribosome. The protein is Large ribosomal subunit protein uL14 of Granulibacter bethesdensis (strain ATCC BAA-1260 / CGDNIH1).